We begin with the raw amino-acid sequence, 73 residues long: DNA-directed RNA polymerase subunit omega (73 aa).

It belongs to the RNA polymerase subunit omega family. The RNAP catalytic core consists of 2 alpha, 1 beta, 1 beta' and 1 omega subunit. When a sigma factor is associated with the core the holoenzyme is formed, which can initiate transcription.

The catalysed reaction is RNA(n) + a ribonucleoside 5'-triphosphate = RNA(n+1) + diphosphate. Functionally, promotes RNA polymerase assembly. Latches the N- and C-terminal regions of the beta' subunit thereby facilitating its interaction with the beta and alpha subunits. In Clostridium novyi (strain NT), this protein is DNA-directed RNA polymerase subunit omega.